Here is a 77-residue protein sequence, read N- to C-terminus: U8-lycotoxin-Ls1d (77 aa).

Residues 1–20 (MKLIIFTGLVLFAIVSLIEA) form the signal peptide. Residues 21–26 (QAENEK) constitute a propeptide that is removed on maturation.

The protein belongs to the neurotoxin 19 (CSTX) family. 08 (U8-Lctx) subfamily. Post-translationally, contains 4 disulfide bonds. Expressed by the venom gland.

The protein localises to the secreted. In Lycosa singoriensis (Wolf spider), this protein is U8-lycotoxin-Ls1d.